The primary structure comprises 932 residues: Protocadherin gamma-A12 (932 aa).

The signal sequence occupies residues 1–29 (MIPARLHRDYKGLVLLGILLGTLWETGCT). Cadherin domains follow at residues 30-133 (QIRY…APYF), 134-242 (RESE…APAF), 243-347 (AQPE…APEV), 348-452 (VLTS…PPVF), 453-562 (PQAS…APEI), and 570-683 (DGST…SPAN). Over 30–692 (QIRYSVPEEL…NSETSDLTLY (663 aa)) the chain is Extracellular. Residues asparagine 265, asparagine 419, and asparagine 545 are each glycosylated (N-linked (GlcNAc...) asparagine). The chain crosses the membrane as a helical span at residues 693–713 (LVVAVAAVSCVFLAFVILLLA). The Cytoplasmic segment spans residues 714 to 932 (LRLRRWHKSR…KKKSGKKEKK (219 aa)). Disordered stretches follow at residues 803–841 (GHGL…WPNN) and 902–932 (ATLT…KEKK). Residues 816–841 (WRFSQAQRPGTSGSQNGDDTGTWPNN) are compositionally biased toward polar residues. Residues 922–932 (NKKKSGKKEKK) are compositionally biased toward basic residues.

Its subcellular location is the cell membrane. Potential calcium-dependent cell-adhesion protein. May be involved in the establishment and maintenance of specific neuronal connections in the brain. This Pan troglodytes (Chimpanzee) protein is Protocadherin gamma-A12 (PCDHGA12).